The chain runs to 191 residues: Photosystem I assembly protein Ycf4 (191 aa).

2 consecutive transmembrane segments (helical) span residues 34–54 and 68–88; these read VASMLSIGGVGFLLASFSSYF and IFVPQGLVMGLYGLAAFLLAI.

This sequence belongs to the Ycf4 family.

It is found in the cellular thylakoid membrane. Seems to be required for the assembly of the photosystem I complex. In Prochlorococcus marinus (strain NATL1A), this protein is Photosystem I assembly protein Ycf4.